A 1043-amino-acid polypeptide reads, in one-letter code: Probable inorganic carbon transporter subunit DabA (1043 aa).

Residues cysteine 460, aspartate 462, histidine 719, and cysteine 734 each contribute to the Zn(2+) site.

Belongs to the inorganic carbon transporter (TC 9.A.2) DabA family. Forms a complex with DabB. The cofactor is Zn(2+).

The protein resides in the cell inner membrane. In terms of biological role, part of an energy-coupled inorganic carbon pump. The chain is Probable inorganic carbon transporter subunit DabA from Thiobacillus denitrificans (strain ATCC 25259 / T1).